Consider the following 2148-residue polypeptide: General transcription factor 3C polypeptide 1 (2148 aa).

Residues 473-487 (GEEAFLSDSESEEES) are compositionally biased toward acidic residues. Disordered regions lie at residues 473–568 (GEEA…FDPH) and 587–609 (NPKEGGGSQKGGRHGSGQDKPHK). Basic residues predominate over residues 491-502 (GKRRGRGSRGHS). Lysine 533 is covalently cross-linked (Glycyl lysine isopeptide (Lys-Gly) (interchain with G-Cter in SUMO2)). Serine 666 carries the phosphoserine modification. Disordered regions lie at residues 717–771 (STAN…EKMG) and 818–863 (TGEQ…SSWE). Composition is skewed to basic and acidic residues over residues 759–770 (ESTRVKKTDEKM) and 825–835 (HSERKTGKQEP). Glycyl lysine isopeptide (Lys-Gly) (interchain with G-Cter in SUMO2) cross-links involve residues lysine 769 and lysine 832. Serine 1062 carries the phosphoserine modification. Residues 1186–1195 (EHFELDREPT) are compositionally biased toward basic and acidic residues. 5 disordered regions span residues 1186-1238 (EHFE…KKLR), 1597-1627 (KSLGKDGGLDDDDEEEDLDEGSGTKRQSVEV), 1823-1881 (KASG…LPAK), 1893-1928 (SPRPGTEEQTEAQAQFAAPEDAGAEGPRQESQESVG), and 2127-2148 (PRPSHSCYQSSAQPSTGVATSR). The residue at position 1195 (threonine 1195) is a Phosphothreonine. The segment covering 1198–1214 (RNRKVRGGKSQKRKRLK) has biased composition (basic residues). Basic and acidic residues predominate over residues 1228–1238 (EHPEAKSKKLR). A compositionally biased stretch (acidic residues) spans 1605–1616 (LDDDDEEEDLDE). 3 positions are modified to phosphoserine: serine 1624, serine 1853, and serine 1893. Residues 1903–1912 (EAQAQFAAPE) are compositionally biased toward low complexity. Residues 2132-2148 (SCYQSSAQPSTGVATSR) show a composition bias toward polar residues.

This sequence belongs to the TFIIIC subunit 1 family. In terms of assembly, part of the TFIIIC subcomplex TFIIIC2, consisting of six subunits, GTF3C1, GTF3C2, GTF3C3, GTF3C4, GTF3C5 and GTF3C6. Interacts with IGHMBP2. Interacts with MAF1.

It is found in the nucleus. Required for RNA polymerase III-mediated transcription. Component of TFIIIC that initiates transcription complex assembly on tRNA and is required for transcription of 5S rRNA and other stable nuclear and cytoplasmic RNAs. Binds to the box B promoter element. This Rattus norvegicus (Rat) protein is General transcription factor 3C polypeptide 1 (Gtf3c1).